The chain runs to 117 residues: uncharacterized protein (117 aa).

The protein resides in the mitochondrion. This is an uncharacterized protein from Arabidopsis thaliana (Mouse-ear cress).